Here is a 431-residue protein sequence, read N- to C-terminus: Transposase for insertion sequence element IS232 (431 aa).

The 60-residue stretch at 20–79 folds into the HTH IS21-type domain; sequence PNFKKLMGNLKMKINKSQLARELNVDRRTIDKYLNGFTPKGTKNKTSKIDTYYEVIAALL. The H-T-H motif DNA-binding region spans 35 to 54; sequence KSQLARELNVDRRTIDKYLN. The region spanning 140-315 is the Integrase catalytic domain; the sequence is YETPPGEQAQ…IPVFALKQEK (176 aa).

Belongs to the transposase IS21/IS408/IS1162 family.

Functionally, involved in the transposition of the insertion sequence. In Bacillus thuringiensis subsp. berliner, this protein is Transposase for insertion sequence element IS232.